The following is a 121-amino-acid chain: Dihydroneopterin aldolase (121 aa).

The substrate site is built by glutamate 16 and methionine 111.

Belongs to the archaeal dihydroneopterin aldolase family. In terms of assembly, homotetramer.

It carries out the reaction 7,8-dihydroneopterin = 6-hydroxymethyl-7,8-dihydropterin + glycolaldehyde. The protein operates within cofactor biosynthesis; 5,6,7,8-tetrahydromethanopterin biosynthesis. Catalyzes the conversion of 7,8-dihydroneopterin (H2Neo) to 6-hydroxymethyl-7,8-dihydropterin (6-HMD). This chain is Dihydroneopterin aldolase, found in Methanopyrus kandleri (strain AV19 / DSM 6324 / JCM 9639 / NBRC 100938).